We begin with the raw amino-acid sequence, 863 residues long: Scm-like with four MBT domains protein 1 (863 aa).

4 MBT repeats span residues 20 to 120 (FSWE…LEAP), 128 to 232 (SDWN…LQPP), 242 to 346 (ADWQ…INPP), and 354 to 451 (FDWA…LSTP). The disordered stretch occupies residues 638-773 (KKKNKRIGRP…SDDENKPPSP (136 aa)). Positions 660–679 (KSSKRRKRRKNIFVHKKKRS) are enriched in basic residues. The segment covering 680 to 691 (SASVDNTPVGSP) has biased composition (polar residues). 2 stretches are compositionally biased toward acidic residues: residues 696–710 (GEDE…EDSL) and 718–727 (QQEELQEESE). The segment covering 734 to 744 (SSSSPTQSETP) has biased composition (low complexity). S764 and S772 each carry phosphoserine. In terms of domain architecture, SAM spans 793–861 (WSVADVVRFI…RIKFAFYEQF (69 aa)).

As to quaternary structure, interacts with MYOD1. Component of the SLC (SFMBT1-LSD1-CoREST) corepressor complex, which also contains KDM1A/LSD1 and RCOR1/CoREST. Interacts with KDM1A/LSD1 and RCOR1/CoREST. Interacts with MYOD1. Interacts with L3MBTL3. In terms of tissue distribution, highly expressed in the testis, low expression is detected in brain, kidney, heart and lung. Highly expressed in germ cells, where it associates with the synaptic regions of meiotic chromosomes in pachytene stage spermatocytes.

Its subcellular location is the nucleus. Functionally, histone-binding protein, which is part of various corepressor complexes. Mediates the recruitment of corepressor complexes to target genes, followed by chromatin compaction and repression of transcription. Plays a role during myogenesis: required for the maintenance of undifferentiated states of myogenic progenitor cells via interaction with MYOD1. Interaction with MYOD1 leads to the recruitment of associated corepressors and silencing of MYOD1 target genes. Part of the SLC complex in germ cells, where it may play a role during spermatogenesis. This Mus musculus (Mouse) protein is Scm-like with four MBT domains protein 1 (Sfmbt1).